The primary structure comprises 589 residues: Putative adenine deaminase BC_3012 (589 aa).

It belongs to the metallo-dependent hydrolases superfamily. Adenine deaminase family.

The enzyme catalyses adenine + H2O + H(+) = hypoxanthine + NH4(+). The protein is Putative adenine deaminase BC_3012 of Bacillus cereus (strain ATCC 14579 / DSM 31 / CCUG 7414 / JCM 2152 / NBRC 15305 / NCIMB 9373 / NCTC 2599 / NRRL B-3711).